The following is a 336-amino-acid chain: Ketol-acid reductoisomerase (NADP(+)) (336 aa).

Residues 1 to 182 (MAVIYYDKDA…GVTRAGVIET (182 aa)) enclose the KARI N-terminal Rossmann domain. NADP(+) is bound by residues 25–28 (FGSQ), R48, S51, S53, and 83–86 (DEHQ). H108 is a catalytic residue. G134 is a binding site for NADP(+). The 146-residue stretch at 183-328 (TFKEETETDL…KELRKMMPWL (146 aa)) folds into the KARI C-terminal knotted domain. Mg(2+) contacts are provided by D191, E195, E227, and E231. S252 is a binding site for substrate.

This sequence belongs to the ketol-acid reductoisomerase family. The cofactor is Mg(2+).

It carries out the reaction (2R)-2,3-dihydroxy-3-methylbutanoate + NADP(+) = (2S)-2-acetolactate + NADPH + H(+). The enzyme catalyses (2R,3R)-2,3-dihydroxy-3-methylpentanoate + NADP(+) = (S)-2-ethyl-2-hydroxy-3-oxobutanoate + NADPH + H(+). It participates in amino-acid biosynthesis; L-isoleucine biosynthesis; L-isoleucine from 2-oxobutanoate: step 2/4. It functions in the pathway amino-acid biosynthesis; L-valine biosynthesis; L-valine from pyruvate: step 2/4. In terms of biological role, involved in the biosynthesis of branched-chain amino acids (BCAA). Catalyzes an alkyl-migration followed by a ketol-acid reduction of (S)-2-acetolactate (S2AL) to yield (R)-2,3-dihydroxy-isovalerate. In the isomerase reaction, S2AL is rearranged via a Mg-dependent methyl migration to produce 3-hydroxy-3-methyl-2-ketobutyrate (HMKB). In the reductase reaction, this 2-ketoacid undergoes a metal-dependent reduction by NADPH to yield (R)-2,3-dihydroxy-isovalerate. This Thermotoga neapolitana (strain ATCC 49049 / DSM 4359 / NBRC 107923 / NS-E) protein is Ketol-acid reductoisomerase (NADP(+)).